The primary structure comprises 611 residues: Glutamine--fructose-6-phosphate aminotransferase [isomerizing] (611 aa).

Cys-2 acts as the Nucleophile; for GATase activity in catalysis. The region spanning 2 to 219 (CGIVGGVSKT…DGDVAMLQRQ (218 aa)) is the Glutamine amidotransferase type-2 domain. SIS domains follow at residues 287–427 (AAAM…APGA) and 460–601 (WAAR…VDRP). Residue Lys-606 is the For Fru-6P isomerization activity of the active site.

In terms of assembly, homodimer.

The protein localises to the cytoplasm. It carries out the reaction D-fructose 6-phosphate + L-glutamine = D-glucosamine 6-phosphate + L-glutamate. Functionally, catalyzes the first step in hexosamine metabolism, converting fructose-6P into glucosamine-6P using glutamine as a nitrogen source. The polypeptide is Glutamine--fructose-6-phosphate aminotransferase [isomerizing] (Acidithiobacillus ferridurans).